The chain runs to 829 residues: Leucine--tRNA ligase (829 aa).

Residues 34-44 carry the 'HIGH' region motif; sequence PYPSGNIHMGH. The 'KMSKS' region motif lies at 591–595; sequence KMSKS. Lys594 provides a ligand contact to ATP.

It belongs to the class-I aminoacyl-tRNA synthetase family.

The protein localises to the cytoplasm. The catalysed reaction is tRNA(Leu) + L-leucine + ATP = L-leucyl-tRNA(Leu) + AMP + diphosphate. The protein is Leucine--tRNA ligase of Ehrlichia canis (strain Jake).